Here is a 206-residue protein sequence, read N- to C-terminus: D-ribitol-5-phosphate phosphatase (206 aa).

D8 serves as the catalytic Nucleophile. D8 and D172 together coordinate Mg(2+).

It belongs to the HAD-like hydrolase superfamily. The cofactor is Mg(2+).

It carries out the reaction D-ribitol 1-phosphate + H2O = ribitol + phosphate. It catalyses the reaction D-ribitol 5-phosphate + H2O = ribitol + phosphate. The enzyme catalyses 5-amino-6-(5-phospho-D-ribitylamino)uracil + H2O = 5-amino-6-(D-ribitylamino)uracil + phosphate. Its pathway is cofactor biosynthesis; riboflavin biosynthesis; 5-amino-6-(D-ribitylamino)uracil from GTP: step 4/4. Its function is as follows. Catalyzes the dephosphorylation of D-ribitol-5-phosphate and D-ribitol-1-phosphate. Is also able to dephosphorylate 5-amino-6-(5-phospho-D-ribitylamino)uracil, and thus could be involved in the riboflavin biosynthesis pathway. This is D-ribitol-5-phosphate phosphatase from Bacteroides thetaiotaomicron (strain ATCC 29148 / DSM 2079 / JCM 5827 / CCUG 10774 / NCTC 10582 / VPI-5482 / E50).